The chain runs to 349 residues: Isopentenyl-diphosphate delta-isomerase (349 aa).

9-10 (RK) provides a ligand contact to substrate. FMN-binding positions include 65–67 (AMT), Ser95, and Asn124. 95–97 (STH) is a binding site for substrate. Residue Gln154 participates in substrate binding. Glu155 contacts Mg(2+). FMN-binding positions include Lys186, Ser211, Thr216, 262–264 (GLR), and 283–284 (SR).

Belongs to the IPP isomerase type 2 family. In terms of assembly, homooctamer. Dimer of tetramers. FMN is required as a cofactor. It depends on NADPH as a cofactor. The cofactor is Mg(2+).

The protein localises to the cytoplasm. It catalyses the reaction isopentenyl diphosphate = dimethylallyl diphosphate. Its function is as follows. Involved in the biosynthesis of isoprenoids. Catalyzes the 1,3-allylic rearrangement of the homoallylic substrate isopentenyl (IPP) to its allylic isomer, dimethylallyl diphosphate (DMAPP). This is Isopentenyl-diphosphate delta-isomerase from Staphylococcus epidermidis (strain ATCC 35984 / DSM 28319 / BCRC 17069 / CCUG 31568 / BM 3577 / RP62A).